A 422-amino-acid chain; its full sequence is Enolase (422 aa).

Gln162 serves as a coordination point for (2R)-2-phosphoglycerate. The active-site Proton donor is the Glu204. Asp241, Glu284, and Asp311 together coordinate Mg(2+). (2R)-2-phosphoglycerate contacts are provided by Lys336, Arg365, Ser366, and Lys387. Lys336 serves as the catalytic Proton acceptor.

This sequence belongs to the enolase family. The cofactor is Mg(2+).

It is found in the cytoplasm. Its subcellular location is the secreted. It localises to the cell surface. It carries out the reaction (2R)-2-phosphoglycerate = phosphoenolpyruvate + H2O. Its pathway is carbohydrate degradation; glycolysis; pyruvate from D-glyceraldehyde 3-phosphate: step 4/5. Catalyzes the reversible conversion of 2-phosphoglycerate (2-PG) into phosphoenolpyruvate (PEP). It is essential for the degradation of carbohydrates via glycolysis. The sequence is that of Enolase from Bartonella tribocorum (strain CIP 105476 / IBS 506).